Here is a 163-residue protein sequence, read N- to C-terminus: MKSLSLLRYLAIAIIVLLLDQLSKWSALSNLQMGIPEPVLPFMNWLLLFNPGTAFSFLAQGSGWQRWFFTVLGLAASIYIIWMLYKSQSDKLLCIALSLILGGALGNVLDRVMYGAVVDFIDLHYANWHWPAFNIADSAICVGAALIIWGELRKSFGKSAQSH.

The next 4 helical transmembrane spans lie at 9–29, 39–59, 67–87, and 92–112; these read YLAI…SALS, VLPF…SFLA, WFFT…LYKS, and LLCI…LDRV. Residues aspartate 119 and aspartate 137 contribute to the active site. The helical transmembrane segment at 130 to 150 threads the bilayer; sequence WPAFNIADSAICVGAALIIWG.

The protein belongs to the peptidase A8 family.

It localises to the cell inner membrane. The enzyme catalyses Release of signal peptides from bacterial membrane prolipoproteins. Hydrolyzes -Xaa-Yaa-Zaa-|-(S,diacylglyceryl)Cys-, in which Xaa is hydrophobic (preferably Leu), and Yaa (Ala or Ser) and Zaa (Gly or Ala) have small, neutral side chains.. Its pathway is protein modification; lipoprotein biosynthesis (signal peptide cleavage). In terms of biological role, this protein specifically catalyzes the removal of signal peptides from prolipoproteins. In Polynucleobacter necessarius subsp. necessarius (strain STIR1), this protein is Lipoprotein signal peptidase.